The following is an 86-amino-acid chain: Toxin Td1 (86 aa).

An N-terminal signal peptide occupies residues 1 to 20 (MIRFILFISCFFLIGMVIEC). One can recognise an LCN-type CS-alpha/beta domain in the interval 21–83 (KDGYLMEPNG…VWERATNRCG (63 aa)). 4 disulfide bridges follow: Cys31/Cys82, Cys35/Cys57, Cys43/Cys63, and Cys47/Cys65. Residue Lys84 is modified to Lysine amide.

Expressed by the venom gland.

The protein resides in the secreted. In terms of biological role, beta toxins bind voltage-independently at site-4 of sodium channels (Nav) and shift the voltage of activation toward more negative potentials thereby affecting sodium channel activation and promoting spontaneous and repetitive firing. The polypeptide is Toxin Td1 (Tityus discrepans (Venezuelan scorpion)).